A 305-amino-acid polypeptide reads, in one-letter code: Nucleotide-binding protein Mjls_2437 (305 aa).

28–35 (GLSGAGRG) lines the ATP pocket. 79-82 (DVRS) is a GTP binding site.

Belongs to the RapZ-like family.

In terms of biological role, displays ATPase and GTPase activities. This is Nucleotide-binding protein Mjls_2437 from Mycobacterium sp. (strain JLS).